Here is a 672-residue protein sequence, read N- to C-terminus: Glycerophosphocholine phosphodiesterase GPCPD1 (672 aa).

In terms of domain architecture, CBM20 spans methionine 1–isoleucine 115. Substrate-binding positions include lysine 70 and histidine 88–lysine 89. A phosphoserine mark is found at serine 175 and serine 424. Residues proline 318–glutamine 618 enclose the GP-PDE domain. Position 608 is a phosphotyrosine (tyrosine 608).

The protein belongs to the glycerophosphoryl diester phosphodiesterase family. In terms of tissue distribution, widely expressed, with highest expression in spinal chord.

The protein localises to the cytoplasm. Its subcellular location is the cytosol. The enzyme catalyses sn-glycerol 3-phosphocholine + H2O = sn-glycerol 3-phosphate + choline + H(+). Functionally, may be involved in the negative regulation of skeletal muscle differentiation, independently of its glycerophosphocholine phosphodiesterase activity. The chain is Glycerophosphocholine phosphodiesterase GPCPD1 (GPCPD1) from Homo sapiens (Human).